We begin with the raw amino-acid sequence, 310 residues long: Ribosomal RNA small subunit methyltransferase H (310 aa).

S-adenosyl-L-methionine-binding positions include 33-35, Asp-53, Phe-79, Asp-100, and Gln-107; that span reads AGH.

It belongs to the methyltransferase superfamily. RsmH family.

Its subcellular location is the cytoplasm. It carries out the reaction cytidine(1402) in 16S rRNA + S-adenosyl-L-methionine = N(4)-methylcytidine(1402) in 16S rRNA + S-adenosyl-L-homocysteine + H(+). Functionally, specifically methylates the N4 position of cytidine in position 1402 (C1402) of 16S rRNA. This chain is Ribosomal RNA small subunit methyltransferase H, found in Clostridium botulinum (strain Eklund 17B / Type B).